The chain runs to 300 residues: Matrix protein (300 aa).

The disordered stretch occupies residues 1–36; that stretch reads MHMFPLGVVEDSDPPGPPIGRASGSPPPGAGRSTAK.

As to quaternary structure, homodimer. Dimerization is critical for virion formation. Interacts with host ANP32B.

The protein resides in the virion. It is found in the host cell membrane. Functionally, the M protein has a crucial role in virus assembly and interacts with the RNP complex as well as with the viral membrane. Associates with phosphatidylserine (PS) and phosphatidylinositol 4,5-bisphosphate (PIP2) at the plasma membrane. Interaction with PIP2 triggers matrix protein lattice polymerization. Matrix proteins induce host membrane deformation and curvature necessary for virion assembly/budding. The sequence is that of Matrix protein (M) from Measles virus (strain Yamagata-1) (MeV).